A 753-amino-acid chain; its full sequence is Polyribonucleotide nucleotidyltransferase (753 aa).

Positions 543 and 549 each coordinate Mg(2+). One can recognise a KH domain in the interval 609–668 (PRITTVKIPVAKIGELIGPKGKNINALTEETGANISIEDDGTVFISAADGASAEAAIEKI). One can recognise an S1 motif domain in the interval 680-749 (GERFLGTVVK…NRGKISLVPV (70 aa)).

Belongs to the polyribonucleotide nucleotidyltransferase family. The cofactor is Mg(2+).

It is found in the cytoplasm. It catalyses the reaction RNA(n+1) + phosphate = RNA(n) + a ribonucleoside 5'-diphosphate. Functionally, involved in mRNA degradation. Catalyzes the phosphorolysis of single-stranded polyribonucleotides processively in the 3'- to 5'-direction. The sequence is that of Polyribonucleotide nucleotidyltransferase from Corynebacterium glutamicum (strain ATCC 13032 / DSM 20300 / JCM 1318 / BCRC 11384 / CCUG 27702 / LMG 3730 / NBRC 12168 / NCIMB 10025 / NRRL B-2784 / 534).